The sequence spans 205 residues: Large ribosomal subunit protein eL15 (205 aa).

2 disordered regions span residues 70 to 90 (GRKR…HGVN) and 172 to 197 (RGLR…KRRN).

It belongs to the eukaryotic ribosomal protein eL15 family.

The chain is Large ribosomal subunit protein eL15 (rpl15-1) from Dictyostelium discoideum (Social amoeba).